A 997-amino-acid chain; its full sequence is Glutamate [NMDA] receptor subunit 1 (997 aa).

A signal peptide spans methionine 1–alanine 26. The Extracellular portion of the chain corresponds to alanine 27–serine 573. N-linked (GlcNAc...) asparagine glycosylation is found at asparagine 258, asparagine 314, asparagine 345, asparagine 397, asparagine 454, asparagine 481, and asparagine 501. Residues proline 530–threonine 532 and arginine 537 each bind glycine. A helical transmembrane segment spans residues asparagine 574–leucine 594. Over aspartate 595–tryptophan 651 the chain is Cytoplasmic. A helical membrane pass occupies residues alanine 652–leucine 672. Residues glutamate 673–asparagine 831 are Extracellular-facing. A glycan (N-linked (GlcNAc...) asparagine) is linked at asparagine 693. Residues serine 703 and aspartate 747 each coordinate glycine. Residues methionine 832–isoleucine 852 form a helical membrane-spanning segment. At glutamate 853 to valine 997 the chain is on the cytoplasmic side. The tract at residues leucine 970 to valine 997 is disordered. Over residues glycine 987–valine 997 the composition is skewed to polar residues.

It belongs to the glutamate-gated ion channel (TC 1.A.10.1) family. In terms of assembly, forms a heteromeric NMDA channel with Nmdar2.

The protein localises to the cell membrane. The protein resides in the postsynaptic cell membrane. Its subcellular location is the postsynaptic density. Functionally, NMDA receptor subtype of glutamate-gated ion channels with high calcium permeability and voltage-dependent sensitivity to magnesium. Mediated by glycine. This protein plays a key role in synaptic plasticity, synaptogenesis, excitotoxicity, memory acquisition and learning. It mediates neuronal functions in glutamate neurotransmission. Is involved in the cell surface targeting of NMDA receptors. Plays a role in associative learning and in long-term memory consolidation. This chain is Glutamate [NMDA] receptor subunit 1, found in Drosophila yakuba (Fruit fly).